The chain runs to 562 residues: Probable malate:quinone oxidoreductase (562 aa).

It belongs to the MQO family. FAD serves as cofactor.

The enzyme catalyses (S)-malate + a quinone = a quinol + oxaloacetate. Its pathway is carbohydrate metabolism; tricarboxylic acid cycle; oxaloacetate from (S)-malate (quinone route): step 1/1. The sequence is that of Probable malate:quinone oxidoreductase from Stenotrophomonas maltophilia (strain K279a).